The sequence spans 547 residues: MARFVFITGGVVSSLGKGLASAALGALLQARGFSVRLRKLDPYLNVDPGTMSPFEHGEVFVTDDGAETDLDLGHYERFTGVAARRTDSVSSGRIYSNVLEKERRGDYLGKTIQVIPHVTNEIKDFISIGEDEVDFMLCEIGGTVGDIEGLPFFEAIRQFGQDKPRGQCIFMHLTLLPYIAASGELKTKPTQHSVKELRSIGIAPDVLVCRSEGPIPQKERDKLALFCNVRPESVIAAQDLKSIYEAPLAYHREGLDQAVLDAFSISPAPKPDLTVWHDVADRIHNPEGEVNVAIVGKYTQLEDAYKSIAEALTHGGMANRVKVKSEWIDAEIFEREDPVPHLEKFDAILVPGGFGERGTEGKIKAAQFAREHKIPYLGICLGMQMAVIESARHLTDLTDAGSEEFDHEAGKRRFTPVVYHLKEWVQGNHKVERKVDDDKGGTMRLGAYTAKLVEGSKVAQIYGSTTIEERHRHRYEVDIQYRDQLQAEGLIFSGMSPDGRLPEIVEVKDHPWFIGVQFHPELKSKPFAPHPLFADFVRAAKEVSRLV.

The interval 1 to 265 (MARFVFITGG…DQAVLDAFSI (265 aa)) is amidoligase domain. A CTP-binding site is contributed by Ser13. Ser13 contacts UTP. ATP contacts are provided by residues 14 to 19 (SLGKGL) and Asp71. The Mg(2+) site is built by Asp71 and Glu139. CTP-binding positions include 146–148 (DIE), 186–191 (KTKPTQ), and Lys222. Residues 186–191 (KTKPTQ) and Lys222 contribute to the UTP site. Positions 291–546 (NVAIVGKYTQ…VRAAKEVSRL (256 aa)) constitute a Glutamine amidotransferase type-1 domain. Gly353 contacts L-glutamine. Cys380 serves as the catalytic Nucleophile; for glutamine hydrolysis. Residues 381–384 (LGMQ), Glu404, and Arg474 each bind L-glutamine. Active-site residues include His519 and Glu521.

The protein belongs to the CTP synthase family. Homotetramer.

It catalyses the reaction UTP + L-glutamine + ATP + H2O = CTP + L-glutamate + ADP + phosphate + 2 H(+). The catalysed reaction is L-glutamine + H2O = L-glutamate + NH4(+). It carries out the reaction UTP + NH4(+) + ATP = CTP + ADP + phosphate + 2 H(+). Its pathway is pyrimidine metabolism; CTP biosynthesis via de novo pathway; CTP from UDP: step 2/2. Allosterically activated by GTP, when glutamine is the substrate; GTP has no effect on the reaction when ammonia is the substrate. The allosteric effector GTP functions by stabilizing the protein conformation that binds the tetrahedral intermediate(s) formed during glutamine hydrolysis. Inhibited by the product CTP, via allosteric rather than competitive inhibition. Functionally, catalyzes the ATP-dependent amination of UTP to CTP with either L-glutamine or ammonia as the source of nitrogen. Regulates intracellular CTP levels through interactions with the four ribonucleotide triphosphates. This Dinoroseobacter shibae (strain DSM 16493 / NCIMB 14021 / DFL 12) protein is CTP synthase.